We begin with the raw amino-acid sequence, 499 residues long: Endosomal/lysosomal proton channel TMEM175 (499 aa).

Residues 1–10 are compositionally biased toward polar residues; it reads MSRLQVQEQA. The interval 1–26 is disordered; the sequence is MSRLQVQEQAVDSEGDSSLYRRDEEG. Topologically, residues 1-30 are cytoplasmic; that stretch reads MSRLQVQEQAVDSEGDSSLYRRDEEGTQSS. A helical transmembrane segment spans residues 31 to 53; sequence HRMLGFSDALLSIIATVMILPVT. Residues 32–38 carry the RxxxFSD motif 1 motif; that stretch reads RMLGFSD. The Lumenal portion of the chain corresponds to 54-74; it reads HTEISPEQQFDKSIQKLLATR. The segment at 55-60 is short helix H1-1; sequence TEISPE. The segment at 62–68 is short helix H2-1; sequence QFDKSIQ. Residues 75 to 97 traverse the membrane as a helical segment; it reads IAVYLMTFLIVTVAWAAHTRLFQ. The Cytoplasmic segment spans residues 98-103; the sequence is VVGKID. Residues 104–125 form a helical membrane-spanning segment; it reads DTLALLNLACMMTITLLPYTFS. Topologically, residues 126 to 135 are lumenal; sequence LMVTFPDVPL. The helical transmembrane segment at 136-157 threads the bilayer; the sequence is GIFLFCMCVIAIGSVQAMIVGY. At 158-181 the chain is on the cytoplasmic side; sequence AFHFPHLLNPQIQCSTHRALSRRH. The helical transmembrane segment at 182–202 threads the bilayer; that stretch reads ILHLVLRGPALCFVAAVFSLF. The Lumenal portion of the chain corresponds to 203 to 207; sequence FFPLS. A helical transmembrane segment spans residues 208-227; it reads YLLMVTVIFLPHISKATTWC. Residues 228-254 are Cytoplasmic-facing; it reads KDKFMGHRESPAHNVEPFSIDLHAPLS. Residues 255–279 form a helical membrane-spanning segment; it reads KERVEAFSDGVYAIVATLLILDICE. Residues 257–263 carry the RxxxFSD motif 2 motif; that stretch reads RVEAFSD. Residues 280-306 lie on the Lumenal side of the membrane; sequence DNVPDPKDVQQKFSGSLVAALGAYGPQ. A short helix H1-2 region spans residues 285-293; that stretch reads PKDVQQKFS. Positions 295–301 are short helix H2-2; the sequence is SLVAALG. The chain crosses the membrane as a helical span at residues 307 to 329; that stretch reads FLAYFGSFATVGLLWFAHHSLFL. At 330 to 335 the chain is on the cytoplasmic side; it reads HVRKAT. Residues 336–357 traverse the membrane as a helical segment; sequence QTMGLFNILSLAFVGGLPLAYQ. The Lumenal segment spans residues 358-372; sequence QTSAFARQPRDELER. A helical membrane pass occupies residues 373–393; it reads VRVSCAIIFFASIFQFAIWTT. At 394-413 the chain is on the cytoplasmic side; that stretch reads ALLHQRETLQPAVQFGGQEH. Residues 414–437 form a helical membrane-spanning segment; that stretch reads AFMFAKLALYPCASLLAFAATCLL. Over 438–439 the chain is Lumenal; sequence SR. Residues 440 to 466 traverse the membrane as a helical segment; the sequence is FSTAIFHLMQIAVPFAFLLLRLLVRLA. Residues 467 to 499 are Cytoplasmic-facing; sequence LAGLQVLWDLWPERPQQDQGEPETQSQLLPASC.

It belongs to the TMEM175 family. Homodimer. Interacts with AKT (AKT1, AKT2 or AKT3); leading to formation of the lysoK(GF) complex, which activates the channel. Interacts with LAMP1; inhibiting the proton channel activity of TMEM175. Interacts with LAMP2; inhibiting the proton channel activity of TMEM175.

It is found in the endosome membrane. It localises to the lysosome membrane. The enzyme catalyses H(+)(in) = H(+)(out). The catalysed reaction is K(+)(in) = K(+)(out). Its activity is regulated as follows. Active at low pH (under pH 4.6): proton channel activity is activated by luminal side protons. Polyunsaturated fatty acids, such as arachidonic acid, also activate the channel activity. Proton channel activity is directly inhibited by LAMP1 or LAMP2, facilitating lysosomal acidification. Channel activity is activated following interaction with AKT (AKT1, AKT2 or AKT3): interaction promotes activation from closed to an open state. Activation by AKT is independent of AKT serine/threonine-protein kinase activity. In terms of biological role, proton-activated proton channel that catalyzes proton efflux from endosomes and lysosomes to maintain a steady-state pH. Activated at low pH (under pH 4.6) by luminal side protons: selectively mediates lysosomal proton release from lysosomes, eliciting a proton leak that balances V-ATPase activity to maintain pH homeostasis. Regulation of lumenal pH stability is required for autophagosome-lysosome fusion. Also acts as a potassium channel at higher pH, regulating potassium conductance in endosomes and lysosomes. Constitutes the pore-forming subunit of the lysoK(GF) complex, a complex activated by extracellular growth factors. The lysoK(GF) complex is composed of TMEM175 and AKT (AKT1, AKT2 or AKT3), a major target of growth factor receptors: in the complex, TMEM175 channel is opened by conformational changes by AKT, leading to its activation. The lysoK(GF) complex is required to protect neurons against stress-induced damage. The protein is Endosomal/lysosomal proton channel TMEM175 of Rattus norvegicus (Rat).